Here is a 103-residue protein sequence, read N- to C-terminus: Isocitrate dehydrogenase [NAD] subunit beta, mitochondrial (103 aa).

Belongs to the isocitrate and isopropylmalate dehydrogenases family. Heterooligomer of subunits alpha (IDH3A), beta (IDH3B), and gamma (IDH3G) in the apparent ratio of 2:1:1. The heterodimer containing one IDH3A and one IDH3B subunit and the heterodimer containing one IDH3A and one IDH3G subunit assemble into a heterotetramer (which contains two subunits of IDH3A, one of IDH3B and one of IDH3G) and further into the heterooctamer.

The protein resides in the mitochondrion. With respect to regulation, the heterotetramer and the heterodimer composed of IDH3A and IDH3G subunits can be allosterically activated by citrate (CIT) or/and ADP, and the two activators can act independently or synergistically. The heterodimer composed of IDH3A and IDH3B subunits cannot be allosterically regulated and the allosteric regulation of the heterotetramer is through the IDH3G subunit and not the IDH3B subunit. The IDH3G subunit contains the allosteric site which consists of a CIT-binding site and an ADP-binding site, and the binding of CIT and ADP causes conformational changes at the allosteric site which are transmitted to the active site in the catalytic subunit (IDH3A) through a cascade of conformational changes at the heterodimer interface, leading to stabilization of the isocitrate-binding at the active site and thus activation of the enzyme. ATP can activate the heterotetramer and the heterodimer composed of IDH3A and IDH3G subunits at low concentrations but inhibits their activities at high concentrations, whereas ATP exhibits only inhibitory effect on the heterodimer composed of IDH3A and IDH3B subunits. In terms of biological role, plays a structural role to facilitate the assembly and ensure the full activity of the enzyme catalyzing the decarboxylation of isocitrate (ICT) into alpha-ketoglutarate. The heterodimer composed of the alpha (IDH3A) and beta (IDH3B) subunits and the heterodimer composed of the alpha (IDH3A) and gamma (IDH3G) subunits, have considerable basal activity but the full activity of the heterotetramer (containing two subunits of IDH3A, one of IDH3B and one of IDH3G) requires the assembly and cooperative function of both heterodimers. The sequence is that of Isocitrate dehydrogenase [NAD] subunit beta, mitochondrial (IDH3B) from Sus scrofa (Pig).